We begin with the raw amino-acid sequence, 336 residues long: Inositol 2-dehydrogenase (336 aa).

This sequence belongs to the Gfo/Idh/MocA family. In terms of assembly, homotetramer.

It carries out the reaction myo-inositol + NAD(+) = scyllo-inosose + NADH + H(+). Functionally, involved in the oxidation of myo-inositol (MI) to 2-keto-myo-inositol (2KMI or 2-inosose). The sequence is that of Inositol 2-dehydrogenase from Pseudomonas syringae pv. syringae (strain B728a).